A 217-amino-acid polypeptide reads, in one-letter code: MNGELVLRLDGARPLSPASVEELSALCDRAEDDREAGPVTVHVTGVPSAGWTAGLTVGLVSKWERVVRRFERLGRLTIAVASGECAGTALDLLLAADLRIVTPGTRLRLAPVGGSTWPGMSVYRLTQQAGAAGIRRAVLLGTPIEVDRALALNLVDEVSDDPAKTLAGLAEAAAALDGAETAIRRQLIFEDGSTTFEDALGAHLAAADRALRREATS.

This sequence belongs to the enoyl-CoA hydratase/isomerase family.

The catalysed reaction is a (3S)-3-hydroxyacyl-CoA = a (2E)-enoyl-CoA + H2O. It catalyses the reaction a 4-saturated-(3S)-3-hydroxyacyl-CoA = a (3E)-enoyl-CoA + H2O. The protein operates within antibiotic biosynthesis; vancomycin biosynthesis. Involved in the biosynthesis of the nonproteinogenic amino acid monomer (S)-3,5-dihydroxyphenylglycine (Dpg) responsible of the production of vancomycin and teicoplanin antibiotics. Catalyzes the syn-addition of a water molecule across the double bond of a trans-2-enoyl-CoA thioester, resulting in the formation of a beta-hydroxyacyl-CoA thioester. Physiologically, DpgB could act as a dehydratase, facilitating the aromatization of the DPA-S-DgpA or DPA-S-CoA intermediate. In Amycolatopsis orientalis (Nocardia orientalis), this protein is Enoyl-CoA-hydratase (dpgB).